A 162-amino-acid polypeptide reads, in one-letter code: Protein A49R (162 aa).

It belongs to the poxviridae A49 protein family. In terms of assembly, interacts with host BTRC; this interaction inhibits NF-kappa-B activation.

The protein resides in the host cytoplasm. It is found in the host nucleus. In terms of biological role, plays a role in the inhibition of host NF-kappa-B activation. Interacts with host BTRC and thereby diminishes ubiquitination of NF-kappa-B inhibitor alpha/NFKBIA. This stabilizes NFKBIA and its interaction with NF-kappaB, so retaining p65/RELA in the cytoplasm and preventing NF-kappa-B-dependent gene expression. The protein is Protein A49R of Bos taurus (Bovine).